The primary structure comprises 315 residues: Transaldolase (315 aa).

Residue K128 is the Schiff-base intermediate with substrate of the active site.

This sequence belongs to the transaldolase family. Type 1 subfamily. As to quaternary structure, homodimer.

It localises to the cytoplasm. The enzyme catalyses D-sedoheptulose 7-phosphate + D-glyceraldehyde 3-phosphate = D-erythrose 4-phosphate + beta-D-fructose 6-phosphate. It functions in the pathway carbohydrate degradation; pentose phosphate pathway; D-glyceraldehyde 3-phosphate and beta-D-fructose 6-phosphate from D-ribose 5-phosphate and D-xylulose 5-phosphate (non-oxidative stage): step 2/3. Transaldolase is important for the balance of metabolites in the pentose-phosphate pathway. The protein is Transaldolase of Opitutus terrae (strain DSM 11246 / JCM 15787 / PB90-1).